We begin with the raw amino-acid sequence, 361 residues long: Nuclear pore complex protein NUP43 (361 aa).

Positions 51-73 (IQSLDPNPRGNHNTNPLIESLSS) are disordered. WD repeat units lie at residues 132–173 (FHVG…YRKV), 177–215 (NGLVAYRAVKWASPTEFVTGGYGFGLQLWDQRKSGEAVS), and 225–265 (KTSA…QPIV).

In terms of assembly, part of the nuclear pore complex (NPC). The NPC has an eight-fold symmetrical structure comprising a central transport channel and two rings, the cytoplasmic and nuclear rings, to which eight filaments are attached. The cytoplasmic filaments have loose ends, while the nuclear filaments are joined in a distal ring, forming a nuclear basket. NPCs are highly dynamic in configuration and composition, and can be devided in 3 subcomplexes, the NUP62 subcomplex, the NUP107-160 subcomplex and the NUP93 subcomplex, containing approximately 30 different nucleoporin proteins.

The protein resides in the nucleus envelope. The protein localises to the nucleus. It localises to the nuclear pore complex. The protein is Nuclear pore complex protein NUP43 of Arabidopsis thaliana (Mouse-ear cress).